The sequence spans 435 residues: Glutamate-1-semialdehyde 2,1-aminomutase (435 aa).

Lys270 bears the N6-(pyridoxal phosphate)lysine mark.

This sequence belongs to the class-III pyridoxal-phosphate-dependent aminotransferase family. HemL subfamily. As to quaternary structure, homodimer. It depends on pyridoxal 5'-phosphate as a cofactor.

The protein localises to the cytoplasm. It catalyses the reaction (S)-4-amino-5-oxopentanoate = 5-aminolevulinate. It participates in porphyrin-containing compound metabolism; protoporphyrin-IX biosynthesis; 5-aminolevulinate from L-glutamyl-tRNA(Glu): step 2/2. The chain is Glutamate-1-semialdehyde 2,1-aminomutase from Wigglesworthia glossinidia brevipalpis.